The sequence spans 335 residues: Fructose-1,6-bisphosphatase class 1 (335 aa).

Residues Glu92, Asp114, Leu116, and Asp117 each contribute to the Mg(2+) site. Substrate contacts are provided by residues 117-120, Asn209, and Lys275; that span reads DGSS. Residue Glu281 coordinates Mg(2+).

Belongs to the FBPase class 1 family. In terms of assembly, homotetramer. Requires Mg(2+) as cofactor.

It is found in the cytoplasm. The enzyme catalyses beta-D-fructose 1,6-bisphosphate + H2O = beta-D-fructose 6-phosphate + phosphate. It functions in the pathway carbohydrate biosynthesis; gluconeogenesis. In Delftia acidovorans (strain DSM 14801 / SPH-1), this protein is Fructose-1,6-bisphosphatase class 1.